A 469-amino-acid polypeptide reads, in one-letter code: 6-phospho-beta-galactosidase (469 aa).

5 residues coordinate D-galactose 6-phosphate: Gln-18, His-115, Asn-158, Glu-159, and Asn-296. Glu-159 (proton donor) is an active-site residue. Residue Glu-374 is the Nucleophile of the active site. 4 residues coordinate D-galactose 6-phosphate: Ser-429, Trp-430, Lys-436, and Tyr-438.

Belongs to the glycosyl hydrolase 1 family.

The enzyme catalyses a 6-phospho-beta-D-galactoside + H2O = D-galactose 6-phosphate + an alcohol. It participates in carbohydrate metabolism; lactose degradation; D-galactose 6-phosphate and beta-D-glucose from lactose 6-phosphate: step 1/1. This is 6-phospho-beta-galactosidase from Staphylococcus haemolyticus (strain JCSC1435).